Reading from the N-terminus, the 1010-residue chain is Eukaryotic translation initiation factor 4E transporter (1010 aa).

The YXXXXLphi motif signature appears at 10 to 16 (YSKVDLL). Disordered regions lie at residues 154–182 (GSNS…RKGS), 196–277 (PDHD…RLVE), 289–320 (YDSK…SKRG), 354–391 (NEER…SNDS), and 921–960 (QSNP…ERIS). Polar residues predominate over residues 201 to 211 (CMSSSPTFSTS). The span at 227–247 (DNWDYKNEKTVEASIENEKET) shows a compositional bias: basic and acidic residues. A compositionally biased stretch (polar residues) spans 248–263 (SPNGSGSTSSLNQHNQ). Basic and acidic residues-rich tracts occupy residues 354 to 364 (NEERSVTEDKN) and 372 to 384 (KNLD…DEAS). Positions 934–953 (SDSSDSGNVIKANSLTSPSY) are enriched in polar residues.

The protein belongs to the 4E-T/EIF4E-T family. In terms of assembly, interacts (via YXXXXLphi motif) with eIF4E1. Interacts with DDX6/me31B. As to expression, expressed in all larval and adult organs and tissues, with highest levels in the ovary.

It is found in the cytoplasm. It localises to the P-body. Its subcellular location is the nucleus. EIF4E1-binding protein that regulates translation and stability of mRNAs in processing bodies (P-bodies). Probably plays a role in P-bodies to coordinate the storage of translationally inactive mRNAs in the cytoplasm and prevent their degradation. Acts as a binding platform for multiple RNA-binding proteins. Required for the formation of P-bodies. The protein is Eukaryotic translation initiation factor 4E transporter of Drosophila melanogaster (Fruit fly).